The following is a 1358-amino-acid chain: Phosphoinositide 3-kinase regulatory subunit 4 (1358 aa).

Glycine 2 carries N-myristoyl glycine lipidation. The region spanning 26 to 324 (FEYDKSLGST…AFPEVFYTFL (299 aa)) is the Protein kinase domain. ATP-binding positions include 32 to 40 (LGSTRFFKV) and lysine 53. The active-site Proton acceptor is the aspartate 148. HEAT repeat units follow at residues 413-450 (ILLD…LVQE), 458-495 (IYPE…TALR), 572-610 (KAND…YVGW), and 612-648 (SSSI…LGLL). Phosphoserine is present on residues serine 808, serine 813, serine 853, and serine 865. The disordered stretch occupies residues 875-899 (LPKTSDHEVVPTGKSPRSESSAGVC). 6 WD repeats span residues 991 to 1030 (EHKS…GKTT), 1040 to 1079 (RIGG…LPKS), 1093 to 1134 (KEDG…NAWT), 1139 to 1178 (LKSG…PISS), 1182 to 1223 (PSRA…RRLT), and 1237 to 1278 (PSPH…RSYV). Residues 1307–1326 (KQKVGPSDDTPRRGPESLPV) form a disordered region. Residues 1315–1326 (DTPRRGPESLPV) are compositionally biased toward basic and acidic residues. Threonine 1316 carries the phosphothreonine modification. The WD 7 repeat unit spans residues 1327–1358 (GHHDIITDIATFQTTQGFIVTASRDGIVKVWK).

The protein belongs to the protein kinase superfamily. Ser/Thr protein kinase family. Component of the PI3K (PI3KC3/PI3K-III/class III phosphatidylinositol 3-kinase) complex the core of which is composed of the catalytic subunit PIK3C3, the regulatory subunit PIK3R4 and BECN1 associating with additional regulatory/auxiliary subunits to form alternative complex forms. Alternative complex forms containing a fourth regulatory subunit in a mutually exclusive manner are PI3K complex I (PI3KC3-C1) containing ATG14, and PI3K complex II (PI3KC3-C2) containing UVRAG. PI3KC3-C1 displays a V-shaped architecture with PIK3R4 serving as a bridge between PIK3C3 and the ATG14:BECN1 subcomplex. Both, PI3KC3-C1 and PI3KC3-C2, can associate with further regulatory subunits, such as RUBCN, SH3GLB1/Bif-1, AMBRA1 and NRBF2. PI3KC3-C1 probably associates with PIK3CB. Interacts with RAB7A in the presence of PIK3C3/VPS34. Interacts with NRBF2. Interacts with ARMC3. The cofactor is Mn(2+). Post-translationally, myristoylated. Probably autophosphorylated.

The protein resides in the late endosome. Its subcellular location is the cytoplasmic vesicle. It localises to the autophagosome. It is found in the membrane. The enzyme catalyses L-seryl-[protein] + ATP = O-phospho-L-seryl-[protein] + ADP + H(+). It carries out the reaction L-threonyl-[protein] + ATP = O-phospho-L-threonyl-[protein] + ADP + H(+). Its function is as follows. Regulatory subunit of the PI3K complex that mediates formation of phosphatidylinositol 3-phosphate; different complex forms are believed to play a role in multiple membrane trafficking pathways: PI3KC3-C1 is involved in initiation of autophagosomes and PI3KC3-C2 in maturation of autophagosomes and endocytosis. Involved in regulation of degradative endocytic trafficking and cytokinesis, probably in the context of PI3KC3-C2. The protein is Phosphoinositide 3-kinase regulatory subunit 4 (Pik3r4) of Rattus norvegicus (Rat).